Here is a 375-residue protein sequence, read N- to C-terminus: Serine protease 23 (375 aa).

The first 23 residues, Met1–Pro23, serve as a signal peptide directing secretion. A glycan (N-linked (GlcNAc...) asparagine) is linked at Asn93. Residues Cys153 and Cys169 are joined by a disulfide bond. His168 acts as the Charge relay system in catalysis. Asn199 carries N-linked (GlcNAc...) asparagine glycosylation. Active-site charge relay system residues include Asp232 and Ser308.

Belongs to the peptidase S1 family.

The protein resides in the secreted. This Bos taurus (Bovine) protein is Serine protease 23 (PRSS23).